The chain runs to 119 residues: Small capsomere-interacting protein (119 aa).

It belongs to the herpesviridae small capsomere-interacting protein family. As to quaternary structure, interacts with the major capsid protein/MCP.

It is found in the virion. It localises to the host nucleus. Participates in the assembly of the infectious particles by decorating the outer surface of the capsid shell and thus forming a layer between the capsid and the tegument. Complexes composed of the major capsid protein and small capsomere-interacting protein/SCP assemble together in the host cytoplasm and are translocated to the nucleus, where they accumulate and participate in capsid assembly. The polypeptide is Small capsomere-interacting protein (Equine herpesvirus 1 (strain V592) (EHV-1)).